The following is a 110-amino-acid chain: UPF0060 membrane protein BPSL1340 (110 aa).

4 helical membrane passes run 9–29 (ALFV…WLVL), 34–54 (PAWL…LLTL), 64–84 (AAYG…VDGV), and 86–106 (LSRW…VIAL).

This sequence belongs to the UPF0060 family.

It is found in the cell inner membrane. The chain is UPF0060 membrane protein BPSL1340 from Burkholderia pseudomallei (strain K96243).